The sequence spans 298 residues: DegV domain-containing protein UU535 (298 aa).

Positions 5-287 (FLIMTDSSTT…KGALGIQVIA (283 aa)) constitute a DegV domain. Hexadecanoate is bound by residues Ser65 and Ser96.

Functionally, may bind long-chain fatty acids, such as palmitate, and may play a role in lipid transport or fatty acid metabolism. This chain is DegV domain-containing protein UU535, found in Ureaplasma parvum serovar 3 (strain ATCC 700970).